A 255-amino-acid chain; its full sequence is Hydroxyacylglutathione hydrolase (255 aa).

Zn(2+) contacts are provided by histidine 55, histidine 57, aspartate 59, histidine 60, histidine 112, aspartate 129, and histidine 167.

This sequence belongs to the metallo-beta-lactamase superfamily. Glyoxalase II family. As to quaternary structure, monomer. Requires Zn(2+) as cofactor.

The enzyme catalyses an S-(2-hydroxyacyl)glutathione + H2O = a 2-hydroxy carboxylate + glutathione + H(+). It functions in the pathway secondary metabolite metabolism; methylglyoxal degradation; (R)-lactate from methylglyoxal: step 2/2. Thiolesterase that catalyzes the hydrolysis of S-D-lactoyl-glutathione to form glutathione and D-lactic acid. The polypeptide is Hydroxyacylglutathione hydrolase (Halorhodospira halophila (strain DSM 244 / SL1) (Ectothiorhodospira halophila (strain DSM 244 / SL1))).